Reading from the N-terminus, the 82-residue chain is Small ribosomal subunit protein uS17 (82 aa).

This sequence belongs to the universal ribosomal protein uS17 family. As to quaternary structure, part of the 30S ribosomal subunit.

Its function is as follows. One of the primary rRNA binding proteins, it binds specifically to the 5'-end of 16S ribosomal RNA. In Shewanella piezotolerans (strain WP3 / JCM 13877), this protein is Small ribosomal subunit protein uS17.